We begin with the raw amino-acid sequence, 176 residues long: Pro-glucagon (176 aa).

The signal sequence occupies residues 1-20 (MKSLYFVAGLLVMLAQGSWQ). The span at 25 to 35 (NTEEKSSSFPA) shows a compositional bias: polar residues. The tract at residues 25-59 (NTEEKSSSFPAPQTDPLGDPDQISEDKRHSQGTFT) is disordered. Serine 54 bears the Phosphoserine mark. Positions 84–89 (NKNNIA) are excised as a propeptide. Residues serine 105 and serine 108 each carry the phosphoserine modification. At arginine 127 the chain carries Arginine amide. Residues 131-145 (DFPEEVNIVEELRRR) constitute a propeptide that is removed on maturation. Phosphoserine is present on residues serine 150 and serine 152.

It belongs to the glucagon family. Proglucagon is post-translationally processed in a tissue-specific manner in pancreatic A cells and intestinal L cells. In pancreatic A cells, the major bioactive hormone is glucagon cleaved by PCSK2/PC2. In the intestinal L cells PCSK1/PC1 liberates GLP-1, GLP-2, glicentin and oxyntomodulin. GLP-1 is further N-terminally truncated by post-translational processing in the intestinal L cells resulting in GLP-1(7-37) GLP-1-(7-36)amide. The C-terminal amidation is neither important for the metabolism of GLP-1 nor for its effects on the endocrine pancreas. In terms of tissue distribution, glucagon is secreted in the A cells of the islets of Langerhans. GLP-1, GLP-2, oxyntomodulin and glicentin are secreted from enteroendocrine cells throughout the gastrointestinal tract. GLP-1 and GLP-2 are also secreted in selected neurons in the brain.

Its subcellular location is the secreted. Plays a key role in glucose metabolism and homeostasis. Regulates blood glucose by increasing gluconeogenesis and decreasing glycolysis. A counterregulatory hormone of insulin, raises plasma glucose levels in response to insulin-induced hypoglycemia. Plays an important role in initiating and maintaining hyperglycemic conditions in diabetes. Functionally, potent stimulator of glucose-dependent insulin release. Also stimulates insulin release in response to IL6. Plays important roles on gastric motility and the suppression of plasma glucagon levels. May be involved in the suppression of satiety and stimulation of glucose disposal in peripheral tissues, independent of the actions of insulin. Has growth-promoting activities on intestinal epithelium. May also regulate the hypothalamic pituitary axis (HPA) via effects on LH, TSH, CRH, oxytocin, and vasopressin secretion. Increases islet mass through stimulation of islet neogenesis and pancreatic beta cell proliferation. Inhibits beta cell apoptosis. Its function is as follows. Stimulates intestinal growth and up-regulates villus height in the small intestine, concomitant with increased crypt cell proliferation and decreased enterocyte apoptosis. The gastrointestinal tract, from the stomach to the colon is the principal target for GLP-2 action. Plays a key role in nutrient homeostasis, enhancing nutrient assimilation through enhanced gastrointestinal function, as well as increasing nutrient disposal. Stimulates intestinal glucose transport and decreases mucosal permeability. In terms of biological role, significantly reduces food intake. Inhibits gastric emptying in humans. Suppression of gastric emptying may lead to increased gastric distension, which may contribute to satiety by causing a sensation of fullness. May modulate gastric acid secretion and the gastro-pyloro-duodenal activity. May play an important role in intestinal mucosal growth in the early period of life. The chain is Pro-glucagon (GCG) from Ovis aries (Sheep).